The primary structure comprises 99 residues: Cell division protein FtsB (99 aa).

Topologically, residues 1 to 3 (MRV) are cytoplasmic. The chain crosses the membrane as a helical span at residues 4-21 (FTAILLILLVLLQYRLWF). Residues 22 to 99 (GKNSVPDYLV…KENSTRNVNN (78 aa)) lie on the Periplasmic side of the membrane. Positions 29 to 53 (YLVLKENVVRQQSANEKLQQRNKLL) form a coiled coil.

This sequence belongs to the FtsB family. In terms of assembly, part of a complex composed of FtsB, FtsL and FtsQ.

It is found in the cell inner membrane. Functionally, essential cell division protein. May link together the upstream cell division proteins, which are predominantly cytoplasmic, with the downstream cell division proteins, which are predominantly periplasmic. The sequence is that of Cell division protein FtsB from Colwellia psychrerythraea (strain 34H / ATCC BAA-681) (Vibrio psychroerythus).